A 548-amino-acid polypeptide reads, in one-letter code: Multidrug efflux system permease protein Rv1217c (548 aa).

12 helical membrane-spanning segments follow: residues 39 to 59, 99 to 119, 148 to 168, 178 to 198, 210 to 230, 253 to 273, 313 to 333, 359 to 379, 410 to 430, 450 to 470, 477 to 497, and 521 to 541; these read VSLP…YIAS, GIWK…LTVI, ALLL…LGLL, VAFG…AAVA, AVAF…DAGS, WWVL…AYRL, LLWT…VHGI, AFLA…AVSL, LAMA…AAGL, AAVQ…LFGL, VAWG…LAGF, and VPLL…AMAF.

The complex is probably composed of two ATP-binding proteins (Rv1218c) and a transmembrane protein (Rv1217c).

It is found in the cell inner membrane. Its function is as follows. Probably part of the ABC transporter complex Rv1217c-Rv1218c involved in the resistance to a wide range of structurally unrelated drugs. Probably responsible for the translocation of the substrate across the membrane. The protein is Multidrug efflux system permease protein Rv1217c of Mycobacterium tuberculosis (strain ATCC 25618 / H37Rv).